Here is a 561-residue protein sequence, read N- to C-terminus: Asparagine synthetase [glutamine-hydrolyzing] (561 aa).

The For GATase activity role is filled by C2. One can recognise a Glutamine amidotransferase type-2 domain in the interval C2–K191. L-glutamine is bound by residues R49–V53, N75–E77, and D97. Residues H213–Y536 form the Asparagine synthetase domain. ATP is bound by residues L256, I288, and S363 to G364. K385 is modified (N6-acetyllysine). T545 is modified (phosphothreonine). S557 carries the post-translational modification Phosphoserine.

The enzyme catalyses L-aspartate + L-glutamine + ATP + H2O = L-asparagine + L-glutamate + AMP + diphosphate + H(+). Its pathway is amino-acid biosynthesis; L-asparagine biosynthesis; L-asparagine from L-aspartate (L-Gln route): step 1/1. The chain is Asparagine synthetase [glutamine-hydrolyzing] (Asns) from Mus musculus (Mouse).